The sequence spans 672 residues: Synaptotagmin-like protein 4 (672 aa).

The RabBD domain maps to 4–122 (ILDLSFLSEM…KATGDWFYDQ (119 aa)). The FYVE-type zinc finger occupies 63 to 105 (CARCQEGLGRLISKSNTCVGCNHLVCRECRVLESNGSWRCKVC). Positions 199–222 (SESLDSYTADSDSTSRRDSLDKSG) are disordered. Residues serine 201, serine 204, serine 217, serine 221, and serine 274 each carry the phosphoserine modification. The C2 1 domain maps to 357–479 (VTGKIAFSLK…KLDKKLDHCL (123 aa)). Serine 489 is modified (phosphoserine). Positions 508 to 634 (PASKLPVGGD…ISSGEVVDWM (127 aa)) constitute a C2 2 domain.

In terms of assembly, part of a ternary complex containing STX1A and RAB27A. Can bind both dominant negative and dominant active mutants of RAB27A. Binds STXBP1, RAB3A, RAB8A and RAB27B. Interacts with MYO5A. Detected in insulin-secreting cell lines.

The protein localises to the membrane. Its subcellular location is the cytoplasmic vesicle. It is found in the secretory vesicle membrane. Functionally, modulates exocytosis of dense-core granules and secretion of hormones in the pancreas and the pituitary. Interacts with vesicles containing negatively charged phospholipids in a Ca(2+)-independent manner. The protein is Synaptotagmin-like protein 4 (Sytl4) of Rattus norvegicus (Rat).